A 252-amino-acid chain; its full sequence is MGLCKCPKKKVTNQFCFEHRVNVCEYCLVSSHSRCIVKSYLHWLQDSDYNPVCTLCNGNLSDGDVVRLICYDVFHLSCINNFAQSLPPNTAPAGYTCPNCKNGIFPPEKMVSPVVEQLKQKLSATSWAKAGLGIPVAPLEPLLFSSTVSRKIPEKRPEESLNTSVDHDENKYQRRGAIDWFSRWFGNRVNTKKQTYDDPNASLKRTMMIFFLVILAFVTVTVIFTRVGRNAAANDPFLDPRSNPHIRVEKDS.

The B box-type; degenerate zinc-finger motif lies at M1–W43. Residues C53–K101 form an RING-type; degenerate zinc finger. A helical membrane pass occupies residues M207–V227.

It belongs to the ZFPL1 family.

The protein localises to the membrane. This chain is Zinc finger protein-like 1 homolog (zfpl1), found in Nematostella vectensis (Starlet sea anemone).